The following is a 416-amino-acid chain: Tryptophan synthase beta chain (416 aa).

Lysine 109 carries the N6-(pyridoxal phosphate)lysine modification.

Belongs to the TrpB family. In terms of assembly, tetramer of two alpha and two beta chains. Pyridoxal 5'-phosphate serves as cofactor.

The enzyme catalyses (1S,2R)-1-C-(indol-3-yl)glycerol 3-phosphate + L-serine = D-glyceraldehyde 3-phosphate + L-tryptophan + H2O. It functions in the pathway amino-acid biosynthesis; L-tryptophan biosynthesis; L-tryptophan from chorismate: step 5/5. In terms of biological role, the beta subunit is responsible for the synthesis of L-tryptophan from indole and L-serine. The protein is Tryptophan synthase beta chain of Synechococcus sp. (strain WH7803).